Here is a 374-residue protein sequence, read N- to C-terminus: Chaperone protein DnaJ (374 aa).

The J domain maps to 5–70 (DYYEVLGLEK…DKKANYDRFG (66 aa)). The segment at 137 to 219 (GVEKSINITR…CHGAGHVRKK (83 aa)) adopts a CR-type zinc-finger fold. The Zn(2+) site is built by cysteine 150, cysteine 153, cysteine 167, cysteine 170, cysteine 193, cysteine 196, cysteine 207, and cysteine 210. CXXCXGXG motif repeat units lie at residues 150-157 (CETCGGTG), 167-174 (CDKCGGTG), 193-200 (CDKCGGRG), and 207-214 (CHECHGAG).

Belongs to the DnaJ family. Homodimer. It depends on Zn(2+) as a cofactor.

The protein localises to the cytoplasm. Participates actively in the response to hyperosmotic and heat shock by preventing the aggregation of stress-denatured proteins and by disaggregating proteins, also in an autonomous, DnaK-independent fashion. Unfolded proteins bind initially to DnaJ; upon interaction with the DnaJ-bound protein, DnaK hydrolyzes its bound ATP, resulting in the formation of a stable complex. GrpE releases ADP from DnaK; ATP binding to DnaK triggers the release of the substrate protein, thus completing the reaction cycle. Several rounds of ATP-dependent interactions between DnaJ, DnaK and GrpE are required for fully efficient folding. Also involved, together with DnaK and GrpE, in the DNA replication of plasmids through activation of initiation proteins. The polypeptide is Chaperone protein DnaJ (Clostridium acetobutylicum (strain ATCC 824 / DSM 792 / JCM 1419 / IAM 19013 / LMG 5710 / NBRC 13948 / NRRL B-527 / VKM B-1787 / 2291 / W)).